The primary structure comprises 131 residues: D-ribose pyranase (131 aa).

Residue His20 is the Proton donor of the active site. Substrate contacts are provided by residues Asp28, His98, and 120 to 122 (YSN).

It belongs to the RbsD / FucU family. RbsD subfamily. As to quaternary structure, homodecamer.

It localises to the cytoplasm. It catalyses the reaction beta-D-ribopyranose = beta-D-ribofuranose. The protein operates within carbohydrate metabolism; D-ribose degradation; D-ribose 5-phosphate from beta-D-ribopyranose: step 1/2. Catalyzes the interconversion of beta-pyran and beta-furan forms of D-ribose. The protein is D-ribose pyranase of Limosilactobacillus fermentum (strain NBRC 3956 / LMG 18251) (Lactobacillus fermentum).